Here is a 344-residue protein sequence, read N- to C-terminus: tRNA dimethylallyltransferase (344 aa).

ATP is bound at residue 43–50; it reads GPTCCGKS. Residue 45–50 coordinates substrate; the sequence is TCCGKS. Residues 68–71 form an interaction with substrate tRNA region; that stretch reads DSMQ.

This sequence belongs to the IPP transferase family. Monomer. Mg(2+) is required as a cofactor.

It catalyses the reaction adenosine(37) in tRNA + dimethylallyl diphosphate = N(6)-dimethylallyladenosine(37) in tRNA + diphosphate. Catalyzes the transfer of a dimethylallyl group onto the adenine at position 37 in tRNAs that read codons beginning with uridine, leading to the formation of N6-(dimethylallyl)adenosine (i(6)A). This Protochlamydia amoebophila (strain UWE25) protein is tRNA dimethylallyltransferase.